The chain runs to 299 residues: Probable lipid kinase YegS (299 aa).

The region spanning 2–133 is the DAGKc domain; the sequence is AEFPASLLIL…IDMAQVNKQT (132 aa). Residues Thr40, 66–72, and Thr95 contribute to the ATP site; that span reads GDGTINE. Positions 215, 218, and 220 each coordinate Mg(2+). The active-site Proton acceptor is Glu271.

This sequence belongs to the diacylglycerol/lipid kinase family. YegS lipid kinase subfamily. Requires Mg(2+) as cofactor. Ca(2+) is required as a cofactor.

The protein localises to the cytoplasm. In terms of biological role, probably phosphorylates lipids; the in vivo substrate is unknown. This Escherichia coli O17:K52:H18 (strain UMN026 / ExPEC) protein is Probable lipid kinase YegS.